We begin with the raw amino-acid sequence, 104 residues long: Large ribosomal subunit protein uL24 (104 aa).

It belongs to the universal ribosomal protein uL24 family. Part of the 50S ribosomal subunit.

Its function is as follows. One of two assembly initiator proteins, it binds directly to the 5'-end of the 23S rRNA, where it nucleates assembly of the 50S subunit. In terms of biological role, one of the proteins that surrounds the polypeptide exit tunnel on the outside of the subunit. The polypeptide is Large ribosomal subunit protein uL24 (Yersinia pseudotuberculosis serotype O:1b (strain IP 31758)).